Reading from the N-terminus, the 428-residue chain is UPF0053 inner membrane protein YfjD (428 aa).

Residues methionine 1 to histidine 3 are Cytoplasmic-facing. Positions glutamate 2–methionine 192 constitute a CNNM transmembrane domain. Residues isoleucine 4–serine 24 form a helical membrane-spanning segment. The Periplasmic segment spans residues glycine 25–serine 64. A helical transmembrane segment spans residues leucine 65–glycine 85. The Cytoplasmic portion of the chain corresponds to methionine 86–aspartate 91. Residues alanine 92–leucine 112 form a helical membrane-spanning segment. Over proline 113–serine 129 the chain is Periplasmic. Residues phenylalanine 130–threonine 150 form a helical membrane-spanning segment. The Cytoplasmic segment spans residues arginine 151–glutamate 428. CBS domains are found at residues methionine 208–glutamate 270 and methionine 272–serine 332.

This sequence belongs to the UPF0053 family.

The protein localises to the cell inner membrane. The polypeptide is UPF0053 inner membrane protein YfjD (yfjD) (Escherichia coli (strain K12)).